The chain runs to 206 residues: uncharacterized protein (206 aa).

One can recognise a YrdC-like domain in the interval 14–200 (QRLINQAVEI…TPVVVREGVG (187 aa)).

It belongs to the SUA5 family.

This is an uncharacterized protein from Escherichia coli O6:H1 (strain CFT073 / ATCC 700928 / UPEC).